The primary structure comprises 144 residues: L-fucose mutarotase (144 aa).

His22 functions as the Proton donor in the catalytic mechanism. Residues Asp30, Arg109, and 131-133 (YGN) each bind substrate.

Belongs to the RbsD / FucU family. FucU mutarotase subfamily. As to quaternary structure, homodecamer.

The protein localises to the cytoplasm. The catalysed reaction is alpha-L-fucose = beta-L-fucose. It participates in carbohydrate metabolism; L-fucose metabolism. In terms of biological role, involved in the anomeric conversion of L-fucose. The sequence is that of L-fucose mutarotase from Haemophilus influenzae (strain PittGG).